Consider the following 275-residue polypeptide: Mitochondrial outer membrane protein porin (275 aa).

Residue M1 is modified to Blocked amino end (Met).

This sequence belongs to the eukaryotic mitochondrial porin family. Highly divergent.

It localises to the mitochondrion outer membrane. Forms a channel of about 1,7 nM through the cell membrane that allows diffusion of small hydrophilic molecules. The channel adopts an open conformation at low or zero membrane potential and a closed conformation at potentials above 20 mv. The open state has a weak anion selectivity whereas the closed state is cation-selective. The chain is Mitochondrial outer membrane protein porin (porA) from Dictyostelium discoideum (Social amoeba).